Consider the following 379-residue polypeptide: Ribosomal RNA large subunit methyltransferase G (379 aa).

Belongs to the methyltransferase superfamily. RlmG family.

It localises to the cytoplasm. It carries out the reaction guanosine(1835) in 23S rRNA + S-adenosyl-L-methionine = N(2)-methylguanosine(1835) in 23S rRNA + S-adenosyl-L-homocysteine + H(+). Its function is as follows. Specifically methylates the guanine in position 1835 (m2G1835) of 23S rRNA. The sequence is that of Ribosomal RNA large subunit methyltransferase G from Serratia proteamaculans (strain 568).